The chain runs to 320 residues: Ribonuclease Z (320 aa).

The Zn(2+) site is built by H63, H65, D67, H68, H141, D212, and H270. The active-site Proton acceptor is the D67.

It belongs to the RNase Z family. Homodimer. Zn(2+) is required as a cofactor.

It catalyses the reaction Endonucleolytic cleavage of RNA, removing extra 3' nucleotides from tRNA precursor, generating 3' termini of tRNAs. A 3'-hydroxy group is left at the tRNA terminus and a 5'-phosphoryl group is left at the trailer molecule.. Functionally, zinc phosphodiesterase, which displays some tRNA 3'-processing endonuclease activity. Probably involved in tRNA maturation, by removing a 3'-trailer from precursor tRNA. The protein is Ribonuclease Z of Lacticaseibacillus casei (strain BL23) (Lactobacillus casei).